The primary structure comprises 170 residues: Probable host range protein 2 (170 aa).

Positions 145-170 are disordered; sequence SDSDSDVDDRAELHKRNNDSDSDDYT. Residues 152-163 are compositionally biased toward basic and acidic residues; the sequence is DDRAELHKRNND.

This sequence belongs to the poxviridae C7 protein family.

Its function is as follows. Plays a role for multiplication of the virus in different cell types. In Bos taurus (Bovine), this protein is Probable host range protein 2.